A 96-amino-acid polypeptide reads, in one-letter code: Protein RnfH (96 aa).

The protein belongs to the UPF0125 (RnfH) family.

This is Protein RnfH from Escherichia coli O127:H6 (strain E2348/69 / EPEC).